The primary structure comprises 89 residues: uncharacterized protein (89 aa).

This is an uncharacterized protein from Saccharomyces cerevisiae (strain ATCC 204508 / S288c) (Baker's yeast).